A 782-amino-acid polypeptide reads, in one-letter code: Endonuclease MutS2 (782 aa).

336–343 contacts ATP; it reads GPNTGGKT. In terms of domain architecture, Smr spans 707–782; the sequence is LDLRGYRYED…GFGVTVATLK (76 aa).

Belongs to the DNA mismatch repair MutS family. MutS2 subfamily. As to quaternary structure, homodimer. Binds to stalled ribosomes, contacting rRNA.

Endonuclease that is involved in the suppression of homologous recombination and thus may have a key role in the control of bacterial genetic diversity. Its function is as follows. Acts as a ribosome collision sensor, splitting the ribosome into its 2 subunits. Detects stalled/collided 70S ribosomes which it binds and splits by an ATP-hydrolysis driven conformational change. Acts upstream of the ribosome quality control system (RQC), a ribosome-associated complex that mediates the extraction of incompletely synthesized nascent chains from stalled ribosomes and their subsequent degradation. Probably generates substrates for RQC. This is Endonuclease MutS2 from Staphylococcus aureus (strain JH1).